Here is a 394-residue protein sequence, read N- to C-terminus: GTPase Era, mitochondrial (394 aa).

Positions 32 to 280 (KCLQLAVIGA…RDHLMSISPQ (249 aa)) constitute an Era-type G domain. The G1 stretch occupies residues 40–47 (GAPNVGKS). A GTP-binding site is contributed by 40–47 (GAPNVGKS). Residues 66–70 (DTTTR) form a G2 region. The interval 87–90 (DSPG) is G3. Residues 87–91 (DSPGA) and 160–163 (NKID) contribute to the GTP site. The segment at 160–163 (NKID) is G4. A G5 region spans residues 259-261 (VSS).

Belongs to the TRAFAC class TrmE-Era-EngA-EngB-Septin-like GTPase superfamily. Era GTPase family.

The protein localises to the mitochondrion matrix. It is found in the mitochondrion inner membrane. Its function is as follows. Probable GTPase that plays a role in the mitochondrial ribosomal small subunit assembly. Specifically binds the 12S mitochondrial rRNA (12S mt-rRNA) to a 33 nucleotide section delineating the 3' terminal stem-loop region. May act as a chaperone that protects the 12S mt-rRNA on the 28S mitoribosomal subunit during ribosomal small subunit assembly. May play a role in positively regulating mitochondrial function. Plays a role in fertility. The protein is GTPase Era, mitochondrial of Caenorhabditis elegans.